We begin with the raw amino-acid sequence, 488 residues long: Glutamyl-tRNA(Gln) amidotransferase subunit A (488 aa).

Catalysis depends on charge relay system residues lysine 78 and serine 153. The Acyl-ester intermediate role is filled by serine 177.

Belongs to the amidase family. GatA subfamily. Heterotrimer of A, B and C subunits.

The enzyme catalyses L-glutamyl-tRNA(Gln) + L-glutamine + ATP + H2O = L-glutaminyl-tRNA(Gln) + L-glutamate + ADP + phosphate + H(+). Its function is as follows. Allows the formation of correctly charged Gln-tRNA(Gln) through the transamidation of misacylated Glu-tRNA(Gln) in organisms which lack glutaminyl-tRNA synthetase. The reaction takes place in the presence of glutamine and ATP through an activated gamma-phospho-Glu-tRNA(Gln). This is Glutamyl-tRNA(Gln) amidotransferase subunit A from Solidesulfovibrio magneticus (strain ATCC 700980 / DSM 13731 / RS-1) (Desulfovibrio magneticus).